The chain runs to 513 residues: Cytochrome P450 monooxygenase orf3 (513 aa).

Residues 11–31 (LVALGLIAATIIIYSFTLTVY) traverse the membrane as a helical segment. Asn-211 and Asn-351 each carry an N-linked (GlcNAc...) asparagine glycan. Residue Cys-455 participates in heme binding.

It belongs to the cytochrome P450 family. The cofactor is heme.

It localises to the membrane. Its pathway is mycotoxin biosynthesis. Cytochrome P450 monooxygenase; part of the gene cluster that mediates the biosynthesis of brefeldin A (BFA), a protein transport inhibitor that shows antiviral, antifungal, and antitumor properties. The proposed biosynthesis of BFA involves formation of an acyclic polyketide chain that is differentially tailored throughout the backbone. The highly reducing polyketide synthase Bref-PKS is proposed to synthesize the precisely reduced octaketide precursor, which could then be directly offloaded by the thiohydrolase enzyme Bref-TH followed by a cytochrome P450 monooxygenase-mediated formation of the cyclopentane ring and macrocyclization to afford 7-deoxy BFA. Alternatively, the first ring annulation can also occur on the ACP-tethered intermediate before the thiohydrolase release and lactonization. The C7-hydroxylation by another cytochrome P450 monooxygenase is believed to be the final step in the process to obtain the final structure of BFA. In addition to the HRPKS Bref-PKS and the thiohydrolase Bref-TH, the brefeldin A biosynthesis cluster contains 4 cytochrome p450 monooxygenases (called orf3 to orf6), as well a the probable cluster-specific transcription regulator orf8. The protein is Cytochrome P450 monooxygenase orf3 of Eupenicillium brefeldianum (Penicillium brefeldianum).